Here is a 92-residue protein sequence, read N- to C-terminus: WAP four-disulfide core domain protein 12 (92 aa).

A signal peptide spans 1–23 (MGSSRFLVLMVSLALVTLVAAEG). One can recognise a WAP domain in the interval 27 to 74 (NIEKPEVCPADNVRCIKSDPPQCHTDQDCQGIRKCCYLHCGFKCVIPV). Disulfide bonds link Cys34/Cys62, Cys41/Cys66, Cys49/Cys61, and Cys55/Cys70.

The protein localises to the secreted. Functionally, antibacterial protein. Putative acid-stable proteinase inhibitor. This is WAP four-disulfide core domain protein 12 (WFDC12) from Aotus nancymaae (Ma's night monkey).